A 238-amino-acid polypeptide reads, in one-letter code: Uridylate kinase (238 aa).

Residue 10-13 (KFSG) coordinates ATP. The tract at residues 18–23 (GENGFG) is involved in allosteric activation by GTP. A UMP-binding site is contributed by Gly52. Residues Gly53 and Arg57 each contribute to the ATP site. UMP contacts are provided by residues Asp73 and 134–141 (TGNPFFTT). Residues Thr161, Tyr167, and Asp170 each coordinate ATP.

The protein belongs to the UMP kinase family. Homohexamer.

Its subcellular location is the cytoplasm. It carries out the reaction UMP + ATP = UDP + ADP. The protein operates within pyrimidine metabolism; CTP biosynthesis via de novo pathway; UDP from UMP (UMPK route): step 1/1. Allosterically activated by GTP. Inhibited by UTP. Functionally, catalyzes the reversible phosphorylation of UMP to UDP. The sequence is that of Uridylate kinase from Campylobacter concisus (strain 13826).